The primary structure comprises 314 residues: MLKDLFGKKRKFATVPSETLARVPASTDISKEAGTKEKEVPEGLMNKCPHCGTIHYSKDLEKNLRVCKGCQFHYSMSAPERLQALLDDGVLREEFDANLITANPLGFPGYLEKLEQDMANTNLNEAIITGEGFLGGNRIVIGVMDSRFRMASMGSVVGEKITRAIEQAIERRLPFILFSASGGARMQEGVLSLMQMAKTSAALSRLDRERLLFVSVMTNPTYGGVSASFSSLGDYNIAEPGAMIGFAGRRVIEQTIRQELPKDFQTAEFLLKNGQLDMVVHRKDMRNTLSKLVEMHTSREGVETWQASSPLKSH.

Residues 44-311 form the CoA carboxyltransferase N-terminal domain; sequence LMNKCPHCGT…VETWQASSPL (268 aa). Positions 48, 51, 67, and 70 each coordinate Zn(2+). Residues 48-70 form a C4-type zinc finger; it reads CPHCGTIHYSKDLEKNLRVCKGC.

It belongs to the AccD/PCCB family. As to quaternary structure, acetyl-CoA carboxylase is a heterohexamer composed of biotin carboxyl carrier protein (AccB), biotin carboxylase (AccC) and two subunits each of ACCase subunit alpha (AccA) and ACCase subunit beta (AccD). Zn(2+) serves as cofactor.

The protein resides in the cytoplasm. It catalyses the reaction N(6)-carboxybiotinyl-L-lysyl-[protein] + acetyl-CoA = N(6)-biotinyl-L-lysyl-[protein] + malonyl-CoA. It participates in lipid metabolism; malonyl-CoA biosynthesis; malonyl-CoA from acetyl-CoA: step 1/1. Functionally, component of the acetyl coenzyme A carboxylase (ACC) complex. Biotin carboxylase (BC) catalyzes the carboxylation of biotin on its carrier protein (BCCP) and then the CO(2) group is transferred by the transcarboxylase to acetyl-CoA to form malonyl-CoA. The protein is Acetyl-coenzyme A carboxylase carboxyl transferase subunit beta of Brevibacillus brevis (strain 47 / JCM 6285 / NBRC 100599).